The primary structure comprises 713 residues: Subtilisin-like protease SBT4.9 (713 aa).

The first 24 residues, 1-24 (MARRADSFCLISCVLVSFVISVSA), serve as a signal peptide directing secretion. Residues 25-113 (VTDDSQDKQV…VFPDINYKLQ (89 aa)) constitute a propeptide, activation peptide. Residues 34 to 112 (VYVVYMGSLP…SVFPDINYKL (79 aa)) form the Inhibitor I9 domain. Positions 117–560 (SWDFLGLKEG…AGHVDPIAAI (444 aa)) constitute a Peptidase S8 domain. Aspartate 145 acts as the Charge relay system in catalysis. The N-linked (GlcNAc...) asparagine glycan is linked to asparagine 176. The active-site Charge relay system is the histidine 200. Asparagine 215 and asparagine 223 each carry an N-linked (GlcNAc...) asparagine glycan. Residues 356-415 (NYPLYGGSTDGPLLRGKILVSEDKVSSEIVVANINENYHDYAYVSILPSSALSKDDFDSV) enclose the PA domain. N-linked (GlcNAc...) asparagine glycosylation is present at asparagine 420. The active-site Charge relay system is serine 499. Residues asparagine 536, asparagine 583, asparagine 627, and asparagine 637 are each glycosylated (N-linked (GlcNAc...) asparagine).

It belongs to the peptidase S8 family. In terms of processing, the C-terminal propeptide is autocleaved.

The protein resides in the secreted. The chain is Subtilisin-like protease SBT4.9 from Arabidopsis thaliana (Mouse-ear cress).